The following is a 356-amino-acid chain: MTERRIIHIDMDYFFAQVEMRDNPKLKGKPVIVGGKAIHRGVVSTASYEARAYGVHSAMPMTQAHKLCPNGYYVTSRFDTYREVSGQIMKIFRSYTELVEPMSLDEAYLDITHLVRPDLPASTIANYIRRDIYEVTRLTASAGVSYNKFLAKLASGMNKPNGLTVIDYNNVHEILMQLDIGDFPGVGKASKKKMHQHHIYTGQDLYNKDEFELIRLFGKRGRGLYNKARGIDHNEVKASRVRKSVGTERTFSTDVNDDDVILRKIRELSGKTAERLNKIQKSGKTVTVKIKTYQYETISKQKSLRDPIRTETDIYNIAYTLYNDLKDPEIPIRLIGVTVGSLEQSDFKNLTIYDFI.

One can recognise a UmuC domain in the interval isoleucine 6–glycine 187. Residues aspartate 10 and aspartate 105 each coordinate Mg(2+). Glutamate 106 is a catalytic residue.

Belongs to the DNA polymerase type-Y family. Monomer. Mg(2+) is required as a cofactor.

It is found in the cytoplasm. It catalyses the reaction DNA(n) + a 2'-deoxyribonucleoside 5'-triphosphate = DNA(n+1) + diphosphate. In terms of biological role, poorly processive, error-prone DNA polymerase involved in untargeted mutagenesis. Copies undamaged DNA at stalled replication forks, which arise in vivo from mismatched or misaligned primer ends. These misaligned primers can be extended by PolIV. Exhibits no 3'-5' exonuclease (proofreading) activity. May be involved in translesional synthesis, in conjunction with the beta clamp from PolIII. In Staphylococcus epidermidis (strain ATCC 35984 / DSM 28319 / BCRC 17069 / CCUG 31568 / BM 3577 / RP62A), this protein is DNA polymerase IV.